Reading from the N-terminus, the 365-residue chain is uncharacterized protein (365 aa).

This is an uncharacterized protein from Archaeoglobus fulgidus (strain ATCC 49558 / DSM 4304 / JCM 9628 / NBRC 100126 / VC-16).